We begin with the raw amino-acid sequence, 149 residues long: Myosin light chain 1 (149 aa).

EF-hand domains lie at 2–37 (SATR…IGYN), 81–116 (AKTE…LGEK), and 117–149 (LTDA…VLRQ). Aspartate 15, aspartate 94, threonine 98, lysine 100, and aspartate 105 together coordinate Ca(2+). A Glycyl lysine isopeptide (Lys-Gly) (interchain with G-Cter in ubiquitin) cross-link involves residue lysine 116. Ca(2+)-binding residues include aspartate 123, lysine 127, and aspartate 132.

As to quaternary structure, interacts with MYO1, MYO2 and IQG1 by binding to their IQ domains. Interacts with SEC4.

It localises to the bud neck. The protein resides in the bud tip. Functionally, essential light chain for the class II conventional myosin MYO1. Also acts as light chain for the class V unconventional myosin MYO2 and for IQG1. Involved in the assembly of the contractile actomyosin ring at the bud neck during cytokinesis by recruiting IQG1 to the bud neck. Also required for chitin and MYO2-dependent secretory vesicle deposition to the center of the bud neck for septum formation. May stabilize MYO2 by binding to its IQ domains. Its major function is probably not to regulate MYO1 activity, but rather to coordinate actin ring formation and targeted membrane deposition during cytokinesis via its interactions with MYO1, IQG1 and MYO2. This chain is Myosin light chain 1 (MLC1), found in Saccharomyces cerevisiae (strain ATCC 204508 / S288c) (Baker's yeast).